Here is a 561-residue protein sequence, read N- to C-terminus: Malate synthase, glyoxysomal (561 aa).

The active-site Proton acceptor is R177. D462 (proton donor) is an active-site residue. Positions 559–561 match the Microbody targeting signal motif; the sequence is SRL.

It belongs to the malate synthase family.

Its subcellular location is the glyoxysome. The enzyme catalyses glyoxylate + acetyl-CoA + H2O = (S)-malate + CoA + H(+). It participates in carbohydrate metabolism; glyoxylate cycle; (S)-malate from isocitrate: step 2/2. The polypeptide is Malate synthase, glyoxysomal (Brassica napus (Rape)).